Reading from the N-terminus, the 330-residue chain is DNA-directed RNA polymerase subunit alpha (330 aa).

The alpha N-terminal domain (alpha-NTD) stretch occupies residues Met-1–Glu-231. The segment at Phe-250–Arg-330 is alpha C-terminal domain (alpha-CTD).

It belongs to the RNA polymerase alpha chain family. As to quaternary structure, homodimer. The RNAP catalytic core consists of 2 alpha, 1 beta, 1 beta' and 1 omega subunit. When a sigma factor is associated with the core the holoenzyme is formed, which can initiate transcription.

The enzyme catalyses RNA(n) + a ribonucleoside 5'-triphosphate = RNA(n+1) + diphosphate. Its function is as follows. DNA-dependent RNA polymerase catalyzes the transcription of DNA into RNA using the four ribonucleoside triphosphates as substrates. The protein is DNA-directed RNA polymerase subunit alpha of Paracidovorax citrulli (strain AAC00-1) (Acidovorax citrulli).